The sequence spans 274 residues: MAHYFVGDIQGCFAELQKLLAKVDFNPSRDELWAVGDLVARGPDSLATLRFFRSLGDSAKTVLGNHDLHLMALHGKLKRAKPSDNLTEILESPDISASIDWLRQQPLMRELPEHQLIMSHAGVPPQWSLEVLREEAALVSCALKQDDYLEALIAQMYSDSAEQWDPSAIGIERLRYCINALTRMRYLYVDGRLDFDCKQPPENCTNPQLKPWFEFVSPLRQSHTLVFGHWAALMGNVGDTKLKALDTGCCWGEHLTLWHLEKDQKITQKKLKKS.

Belongs to the Ap4A hydrolase family.

The catalysed reaction is P(1),P(4)-bis(5'-adenosyl) tetraphosphate + H2O = 2 ADP + 2 H(+). Hydrolyzes diadenosine 5',5'''-P1,P4-tetraphosphate to yield ADP. This chain is Bis(5'-nucleosyl)-tetraphosphatase, symmetrical, found in Shewanella baltica (strain OS185).